Consider the following 189-residue polypeptide: Crossover junction endodeoxyribonuclease RuvC (189 aa).

Active-site residues include aspartate 11, glutamate 71, and aspartate 143. The Mg(2+) site is built by aspartate 11, glutamate 71, and aspartate 143.

Belongs to the RuvC family. Homodimer which binds Holliday junction (HJ) DNA. The HJ becomes 2-fold symmetrical on binding to RuvC with unstacked arms; it has a different conformation from HJ DNA in complex with RuvA. In the full resolvosome a probable DNA-RuvA(4)-RuvB(12)-RuvC(2) complex forms which resolves the HJ. Requires Mg(2+) as cofactor.

The protein resides in the cytoplasm. It catalyses the reaction Endonucleolytic cleavage at a junction such as a reciprocal single-stranded crossover between two homologous DNA duplexes (Holliday junction).. The RuvA-RuvB-RuvC complex processes Holliday junction (HJ) DNA during genetic recombination and DNA repair. Endonuclease that resolves HJ intermediates. Cleaves cruciform DNA by making single-stranded nicks across the HJ at symmetrical positions within the homologous arms, yielding a 5'-phosphate and a 3'-hydroxyl group; requires a central core of homology in the junction. The consensus cleavage sequence is 5'-(A/T)TT(C/G)-3'. Cleavage occurs on the 3'-side of the TT dinucleotide at the point of strand exchange. HJ branch migration catalyzed by RuvA-RuvB allows RuvC to scan DNA until it finds its consensus sequence, where it cleaves and resolves the cruciform DNA. The sequence is that of Crossover junction endodeoxyribonuclease RuvC from Methylorubrum extorquens (strain CM4 / NCIMB 13688) (Methylobacterium extorquens).